The following is a 735-amino-acid chain: DNA replication licensing factor mcm5 (735 aa).

An MCM domain is found at 332-538 (IYETVAKSIA…RDMTLAKHVM (207 aa)). Arg-372 contributes to the ADP binding site. Residues 513–516 (SRFD) carry the Arginine finger motif.

The protein belongs to the MCM family. As to quaternary structure, component of the mcm2-7 complex (RLF-M). The complex forms a toroidal hexameric ring with the proposed subunit order mcm2-mcm6-mcm4-mcm7-mcm3-mcm5. The heterodimer of mmcm3/mcm5 interacts with mcm4, mmcm6, mcm7 and weakly with mcm2. Component of the CMG helicase complex, composed of the mcm2-7 complex, the GINS complex and cdc45.

It localises to the nucleus. Its subcellular location is the chromosome. The enzyme catalyses ATP + H2O = ADP + phosphate + H(+). In terms of biological role, acts as a component of the MCM2-7 complex (MCM complex) which is the replicative helicase essential for 'once per cell cycle' DNA replication initiation and elongation in eukaryotic cells. Core component of CDC45-MCM-GINS (CMG) helicase, the molecular machine that unwinds template DNA during replication, and around which the replisome is built. The active ATPase sites in the MCM2-7 ring are formed through the interaction surfaces of two neighboring subunits such that a critical structure of a conserved arginine finger motif is provided in trans relative to the ATP-binding site of the Walker A box of the adjacent subunit. The six ATPase active sites, however, are likely to contribute differentially to the complex helicase activity. This chain is DNA replication licensing factor mcm5, found in Xenopus tropicalis (Western clawed frog).